Here is a 330-residue protein sequence, read N- to C-terminus: Glucokinase (330 aa).

Residue 14–19 (ADIGGT) participates in ATP binding.

This sequence belongs to the bacterial glucokinase family.

Its subcellular location is the cytoplasm. The catalysed reaction is D-glucose + ATP = D-glucose 6-phosphate + ADP + H(+). This is Glucokinase from Colwellia psychrerythraea (strain 34H / ATCC BAA-681) (Vibrio psychroerythus).